The chain runs to 319 residues: Acetyl esterase (319 aa).

Residues 91–93 (HGG) carry the Involved in the stabilization of the negatively charged intermediate by the formation of the oxyanion hole motif. Active-site residues include serine 165, aspartate 262, and histidine 292.

The protein belongs to the 'GDXG' lipolytic enzyme family. As to quaternary structure, homodimer. Interacts with MalT and MelA.

It is found in the cytoplasm. Its function is as follows. Displays esterase activity towards short chain fatty esters (acyl chain length of up to 8 carbons). Able to hydrolyze triacetylglycerol (triacetin) and tributyrylglycerol (tributyrin), but not trioleylglycerol (triolein) or cholesterol oleate. Negatively regulates MalT activity by antagonizing maltotriose binding. Inhibits MelA galactosidase activity. The protein is Acetyl esterase of Escherichia coli O81 (strain ED1a).